Reading from the N-terminus, the 793-residue chain is Ent-copalyl diphosphate synthase, chloroplastic (793 aa).

A chloroplast-targeting transit peptide spans 1–47 (MPLASNPVAFLPSSTAHGDLPAAAFSRSSAGCLQLCRPLTPTSSLQC). Mg(2+) contacts are provided by D372 and D374. The short motif at 372 to 375 (DIDD) is the DXDD motif element.

Belongs to the terpene synthase family. Mg(2+) serves as cofactor.

It localises to the plastid. The protein localises to the chloroplast. It carries out the reaction (2E,6E,10E)-geranylgeranyl diphosphate = ent-copalyl diphosphate. It functions in the pathway plant hormone biosynthesis; gibberellin biosynthesis. In terms of biological role, catalyzes the conversion of geranylgeranyl diphosphate (GGPP) to the gibberellin precursor ent-copalyl diphosphate (CPP). The sequence is that of Ent-copalyl diphosphate synthase, chloroplastic from Salvia miltiorrhiza (Chinese sage).